Consider the following 298-residue polypeptide: Ribosomal RNA processing protein 36 homolog (298 aa).

The interval 1 to 131 (MKPDIIKKRR…SDAPVEMTAM (131 aa)) is disordered. Residues 14 to 56 (SDDEDEYNEEDEMYEDDNNNYEEDEDDDDDDDEDDEDDDENEE) show a composition bias toward acidic residues. Polar residues-rich tracts occupy residues 61–70 (QQLSNVSFSS) and 83–92 (LNLNTITKNL). Coiled-coil stretches lie at residues 88–112 (ITKN…MNSK) and 196–228 (RERD…KNKL). Basic and acidic residues predominate over residues 98–111 (FKKEEQQEKEEMNS). Positions 279–298 (ISSKEKTFLPQRRSFDQDEN) are disordered.

Belongs to the RRP36 family.

It is found in the nucleus. The protein localises to the nucleolus. Its function is as follows. Involved in the early processing steps of the pre-rRNA in the maturation pathway leading to the 18S rRNA. This chain is Ribosomal RNA processing protein 36 homolog, found in Dictyostelium discoideum (Social amoeba).